The sequence spans 679 residues: Glycine--tRNA ligase beta subunit (679 aa).

The protein belongs to the class-II aminoacyl-tRNA synthetase family. As to quaternary structure, tetramer of two alpha and two beta subunits.

Its subcellular location is the cytoplasm. The catalysed reaction is tRNA(Gly) + glycine + ATP = glycyl-tRNA(Gly) + AMP + diphosphate. This is Glycine--tRNA ligase beta subunit from Streptococcus pyogenes serotype M1.